The chain runs to 77 residues: Ubiquitin-like protein NEDD8 (77 aa).

An interaction with uba-3 region spans residues 70–72; the sequence is VLA. A Glycyl lysine isopeptide (Gly-Lys) (interchain with K-? in acceptor proteins) cross-link involves residue Gly76. A propeptide is located at residue Phe77.

It belongs to the ubiquitin family. Interacts with dcn-1. Covalently attached to cullins. May interact with atx-3. In terms of processing, cleavage of precursor form is necessary for function.

It is found in the nucleus. The protein resides in the cytoplasm. In terms of biological role, ubiquitin-like protein which plays an important role in cell cycle control and embryogenesis. Covalent attachment to its substrates requires prior activation by the E1 complex uba-3-ula-1 and linkage to the E2 enzyme ubc-12. Attachment of ned-8 to cullins activates their associated E3 ubiquitin ligase activity, and thus promotes polyubiquitination and proteasomal degradation of cyclins and other regulatory proteins. The sequence is that of Ubiquitin-like protein NEDD8 (ned-8) from Caenorhabditis elegans.